The following is a 277-amino-acid chain: Thymidylate synthase (277 aa).

Arginine 21 is a binding site for dUMP. Position 51 (histidine 51) interacts with (6R)-5,10-methylene-5,6,7,8-tetrahydrofolate. DUMP is bound at residue arginine 126–arginine 127. The active-site Nucleophile is cysteine 159. DUMP is bound by residues arginine 179–aspartate 182, asparagine 190, and histidine 220–tyrosine 222. Residue aspartate 182 participates in (6R)-5,10-methylene-5,6,7,8-tetrahydrofolate binding. Residue alanine 276 coordinates (6R)-5,10-methylene-5,6,7,8-tetrahydrofolate.

This sequence belongs to the thymidylate synthase family. Bacterial-type ThyA subfamily. In terms of assembly, homodimer.

It is found in the cytoplasm. The enzyme catalyses dUMP + (6R)-5,10-methylene-5,6,7,8-tetrahydrofolate = 7,8-dihydrofolate + dTMP. It functions in the pathway pyrimidine metabolism; dTTP biosynthesis. Its function is as follows. Catalyzes the reductive methylation of 2'-deoxyuridine-5'-monophosphate (dUMP) to 2'-deoxythymidine-5'-monophosphate (dTMP) while utilizing 5,10-methylenetetrahydrofolate (mTHF) as the methyl donor and reductant in the reaction, yielding dihydrofolate (DHF) as a by-product. This enzymatic reaction provides an intracellular de novo source of dTMP, an essential precursor for DNA biosynthesis. This Alcanivorax borkumensis (strain ATCC 700651 / DSM 11573 / NCIMB 13689 / SK2) protein is Thymidylate synthase.